The sequence spans 1206 residues: DNA-directed RNA polymerase subunit beta' (1206 aa).

C60, C62, C75, and C78 together coordinate Zn(2+). Mg(2+) is bound by residues D449, D451, and D453. Residues C818, C892, C899, and C902 each coordinate Zn(2+).

It belongs to the RNA polymerase beta' chain family. In terms of assembly, the RNAP catalytic core consists of 2 alpha, 1 beta, 1 beta' and 1 omega subunit. When a sigma factor is associated with the core the holoenzyme is formed, which can initiate transcription. It depends on Mg(2+) as a cofactor. The cofactor is Zn(2+).

It carries out the reaction RNA(n) + a ribonucleoside 5'-triphosphate = RNA(n+1) + diphosphate. Functionally, DNA-dependent RNA polymerase catalyzes the transcription of DNA into RNA using the four ribonucleoside triphosphates as substrates. The polypeptide is DNA-directed RNA polymerase subunit beta' (Shouchella clausii (strain KSM-K16) (Alkalihalobacillus clausii)).